The chain runs to 156 residues: MNLNASMFGQAISFVIFVWLCMKYVWPPLVKLLDERRAEIAQGLEQTEKAAQELELAKANGEALLTEARSKAQAIINQGKQRQEQMVAEAVDLANQEKARIVAEGKAEVESERSKVRQELKDEMADLVIESASKLINRNLDSSANRDLVNRFINEM.

The chain crosses the membrane as a helical span at residues 6–26; the sequence is SMFGQAISFVIFVWLCMKYVW.

This sequence belongs to the ATPase B chain family. F-type ATPases have 2 components, F(1) - the catalytic core - and F(0) - the membrane proton channel. F(1) has five subunits: alpha(3), beta(3), gamma(1), delta(1), epsilon(1). F(0) has three main subunits: a(1), b(2) and c(10-14). The alpha and beta chains form an alternating ring which encloses part of the gamma chain. F(1) is attached to F(0) by a central stalk formed by the gamma and epsilon chains, while a peripheral stalk is formed by the delta and b chains.

It localises to the cell inner membrane. Functionally, f(1)F(0) ATP synthase produces ATP from ADP in the presence of a proton or sodium gradient. F-type ATPases consist of two structural domains, F(1) containing the extramembraneous catalytic core and F(0) containing the membrane proton channel, linked together by a central stalk and a peripheral stalk. During catalysis, ATP synthesis in the catalytic domain of F(1) is coupled via a rotary mechanism of the central stalk subunits to proton translocation. Component of the F(0) channel, it forms part of the peripheral stalk, linking F(1) to F(0). The polypeptide is ATP synthase subunit b 2 (Vibrio campbellii (strain ATCC BAA-1116)).